Reading from the N-terminus, the 194-residue chain is NADH-quinone oxidoreductase subunit B (194 aa).

The [4Fe-4S] cluster site is built by Cys73, Cys74, Cys138, and Cys168.

The protein belongs to the complex I 20 kDa subunit family. In terms of assembly, NDH-1 is composed of 14 different subunits. Subunits NuoB, C, D, E, F, and G constitute the peripheral sector of the complex. Requires [4Fe-4S] cluster as cofactor.

It localises to the cell inner membrane. It catalyses the reaction a quinone + NADH + 5 H(+)(in) = a quinol + NAD(+) + 4 H(+)(out). NDH-1 shuttles electrons from NADH, via FMN and iron-sulfur (Fe-S) centers, to quinones in the respiratory chain. The immediate electron acceptor for the enzyme in this species is believed to be ubiquinone. Couples the redox reaction to proton translocation (for every two electrons transferred, four hydrogen ions are translocated across the cytoplasmic membrane), and thus conserves the redox energy in a proton gradient. This is NADH-quinone oxidoreductase subunit B from Rhizobium johnstonii (strain DSM 114642 / LMG 32736 / 3841) (Rhizobium leguminosarum bv. viciae).